Here is a 94-residue protein sequence, read N- to C-terminus: Co-chaperonin GroES (94 aa).

This sequence belongs to the GroES chaperonin family. In terms of assembly, heptamer of 7 subunits arranged in a ring. Interacts with the chaperonin GroEL.

It is found in the cytoplasm. Together with the chaperonin GroEL, plays an essential role in assisting protein folding. The GroEL-GroES system forms a nano-cage that allows encapsulation of the non-native substrate proteins and provides a physical environment optimized to promote and accelerate protein folding. GroES binds to the apical surface of the GroEL ring, thereby capping the opening of the GroEL channel. This Lactococcus lactis subsp. cremoris (strain SK11) protein is Co-chaperonin GroES.